The primary structure comprises 492 residues: MRLYDLTAHRLRELLLGREVSAAELCRSVLNRIDEVEGRVKAYVTLDREGALRQAAAVDRELQNGRELPPLAGIPFAIKDNICLRGLPATCSSKILHNWVPPYDATVVEKLKDQQTVILGKTNMDEFAMGSSTEHSAFFTTRNPWDPKRVPGGSSGGSAAAVAAGSAICALGSDTGGSIRQPASFCGVVGMKPTYGLVSRYGLVAFASSLDQIGPLTRDVTDCALVMNAICGHDHRDSTSVPKEVPDFTSFLVDDVKGMRIGLPREYFPAELDDGVRRIVMEAVSVFEERGAYVEETSLPHTEYALPVYYLIAPAEASSNLARYDGVRYGYRAPECEDVLDMFRVSRSRGFGAEVKRRIMLGTYALSAGYYDAYYLKALKVRTLIRRDFEEAFEKFDVLLSPTAPETAFIIGAKTEDPIRMYLSDIFTLAVNLAGLPGMSVPAGFVAGLPVGIQFIGKPFAEGTLLRMGYAFQQSTDHHRQRPPETPGGEIS.

Residues lysine 79 and serine 154 each act as charge relay system in the active site. The active-site Acyl-ester intermediate is serine 178.

Belongs to the amidase family. GatA subfamily. In terms of assembly, heterotrimer of A, B and C subunits.

The enzyme catalyses L-glutamyl-tRNA(Gln) + L-glutamine + ATP + H2O = L-glutaminyl-tRNA(Gln) + L-glutamate + ADP + phosphate + H(+). In terms of biological role, allows the formation of correctly charged Gln-tRNA(Gln) through the transamidation of misacylated Glu-tRNA(Gln) in organisms which lack glutaminyl-tRNA synthetase. The reaction takes place in the presence of glutamine and ATP through an activated gamma-phospho-Glu-tRNA(Gln). This chain is Glutamyl-tRNA(Gln) amidotransferase subunit A, found in Desulforudis audaxviator (strain MP104C).